A 676-amino-acid polypeptide reads, in one-letter code: A-type ATP synthase subunit I (676 aa).

The next 8 helical transmembrane spans lie at 341–361 (VFIAIFFPIFFGMMLGDIGYG), 390–410 (AGVMSIIFGFIYGECFGPFIV), 449–469 (ILLFATIVIGIAKILFGFALG), 490–510 (IIGVLGLAMIIFGFAYNVGVF), 538–558 (LNVYYLAALPLLVVWFILFVM), 564–584 (MGAMGVILAVELLTWFGQIMS), 590–610 (AIGLSSVYIAFVINFIGMKLI), and 617–637 (IPIVGAIVLLIGHVGNLILGI).

Belongs to the V-ATPase 116 kDa subunit family. As to quaternary structure, has multiple subunits with at least A(3), B(3), C, D, E, F, H, I and proteolipid K(x).

It localises to the cell membrane. In terms of biological role, component of the A-type ATP synthase that produces ATP from ADP in the presence of a proton gradient across the membrane. This chain is A-type ATP synthase subunit I, found in Archaeoglobus fulgidus (strain ATCC 49558 / DSM 4304 / JCM 9628 / NBRC 100126 / VC-16).